Here is a 157-residue protein sequence, read N- to C-terminus: Cytochrome b6-f complex subunit 4 (157 aa).

3 consecutive transmembrane segments (helical) span residues 35 to 55, 94 to 114, and 130 to 150; these read ILYIFPVVILGTISFSLGLGV, LVGVLSLASVPVILVLTAFIE, and LVYLTSTCYALWLGYGSVLGI.

The protein belongs to the cytochrome b family. PetD subfamily. The 4 large subunits of the cytochrome b6-f complex are cytochrome b6, subunit IV (17 kDa polypeptide, petD), cytochrome f and the Rieske protein, while the 4 small subunits are petG, petL, petM and petN. The complex functions as a dimer.

It is found in the plastid. It localises to the chloroplast thylakoid membrane. Its function is as follows. Component of the cytochrome b6-f complex, which mediates electron transfer between photosystem II (PSII) and photosystem I (PSI), cyclic electron flow around PSI, and state transitions. The sequence is that of Cytochrome b6-f complex subunit 4 from Amphidinium carterae (Dinoflagellate).